The following is a 568-amino-acid chain: 4-hydroxy-7-methoxy-3-oxo-3,4-dihydro-2H-1,4-benzoxazin-2-yl glucoside beta-D-glucosidase, chloroplastic (568 aa).

The N-terminal 50 residues, Met-1–Ala-50, are a transit peptide targeting the chloroplast. A beta-D-glucoside-binding positions include Gln-92, His-194, and Asn-239–Glu-240. Glu-240 serves as the catalytic Proton donor. A disulfide bridge links Cys-259 with Cys-265. A beta-D-glucoside contacts are provided by residues Tyr-383, Glu-456, Trp-504, Glu-511–Trp-512, and Phe-520. Glu-456 functions as the Nucleophile in the catalytic mechanism.

Belongs to the glycosyl hydrolase 1 family. In terms of assembly, homohexamer. Expressed in seedlings, mesocotyl, coleoptile, leaf sheath, and roots.

It is found in the plastid. The protein localises to the chloroplast. It catalyses the reaction DIMBOA beta-D-glucoside + H2O = DIMBOA + D-glucose. The enzyme catalyses DIBOA beta-D-glucoside + H2O = DIBOA + D-glucose. It carries out the reaction Hydrolysis of terminal, non-reducing beta-D-glucosyl residues with release of beta-D-glucose.. Its activity is regulated as follows. Inhibited by castanospermine, Ag(+) and Cu(2+). 34% inhibition by Zn(2+) and not affected by EDTA. Involved in defense of young plant parts against pests via the production of benzoxazolinones (hydroxamic acids) from hydroxamic acid glucosides. The preferred substrate is DIBOA-beta-D-glucoside. Can also use esculin and genistein glucoside as substrates, but no activity with salicin, p-nitrophenyl-alpha-glucoside or substrates related to cell wall components. This is 4-hydroxy-7-methoxy-3-oxo-3,4-dihydro-2H-1,4-benzoxazin-2-yl glucoside beta-D-glucosidase, chloroplastic from Secale cereale (Rye).